Consider the following 211-residue polypeptide: Protein GrpE (211 aa).

Residues 1-10 are compositionally biased toward basic and acidic residues; sequence MTDDTKKPGP. Disordered regions lie at residues 1-37 and 187-211; these read MTDD…PDPV and AKGG…EKDA. Positions 27 to 36 are enriched in acidic residues; the sequence is EQAETAEPDP. Positions 201 to 211 are enriched in polar residues; it reads PGTSSLNEKDA.

It belongs to the GrpE family. Homodimer.

Its subcellular location is the cytoplasm. In terms of biological role, participates actively in the response to hyperosmotic and heat shock by preventing the aggregation of stress-denatured proteins, in association with DnaK and GrpE. It is the nucleotide exchange factor for DnaK and may function as a thermosensor. Unfolded proteins bind initially to DnaJ; upon interaction with the DnaJ-bound protein, DnaK hydrolyzes its bound ATP, resulting in the formation of a stable complex. GrpE releases ADP from DnaK; ATP binding to DnaK triggers the release of the substrate protein, thus completing the reaction cycle. Several rounds of ATP-dependent interactions between DnaJ, DnaK and GrpE are required for fully efficient folding. The chain is Protein GrpE from Agrobacterium fabrum (strain C58 / ATCC 33970) (Agrobacterium tumefaciens (strain C58)).